Here is a 94-residue protein sequence, read N- to C-terminus: Myosuppressin (94 aa).

The N-terminal stretch at 1-24 (MMSPTLMILISITTMAILSGESFG) is a signal peptide. The propeptide occupies 25 to 80 (AMPAQCNSEFLEELPPRLRKICVAIARIWDAREMNDFVDDREYRENLPRYDSSVKR). A Pyrrolidone carboxylic acid modification is found at glutamine 81. Phenylalanine 90 is subject to Phenylalanine amide.

As to expression, expressed throughout the nervous system (at protein level).

It is found in the secreted. Functionally, myoinhibiting neuropeptide. This is Myosuppressin from Camponotus floridanus (Florida carpenter ant).